A 387-amino-acid polypeptide reads, in one-letter code: Phosphoglycerate kinase (387 aa).

Substrate contacts are provided by residues 21-23, R36, 59-62, R113, and R146; these read DLN and HLGR. ATP contacts are provided by residues K197, E314, and 340-343; that span reads GGDT.

The protein belongs to the phosphoglycerate kinase family. In terms of assembly, monomer.

The protein localises to the cytoplasm. The enzyme catalyses (2R)-3-phosphoglycerate + ATP = (2R)-3-phospho-glyceroyl phosphate + ADP. It participates in carbohydrate degradation; glycolysis; pyruvate from D-glyceraldehyde 3-phosphate: step 2/5. The protein is Phosphoglycerate kinase of Pseudomonas syringae pv. syringae (strain B728a).